A 181-amino-acid chain; its full sequence is Inner membrane-spanning protein YciB (181 aa).

Transmembrane regions (helical) follow at residues 10 to 30 (LIIF…GALI), 50 to 70 (MHLI…VFHD), 72 to 92 (AFIK…LGVS), 118 to 138 (VTWY…YVAF), and 148 to 168 (FKVF…VFYL).

This sequence belongs to the YciB family.

It localises to the cell inner membrane. In terms of biological role, plays a role in cell envelope biogenesis, maintenance of cell envelope integrity and membrane homeostasis. In Shewanella sp. (strain ANA-3), this protein is Inner membrane-spanning protein YciB.